The primary structure comprises 332 residues: CAX-interacting protein 4 (332 aa).

Residues 33-59 (GYDPYAPTSKEEPKTTQQKTEDPENSY) are disordered. The span at 41-54 (SKEEPKTTQQKTED) shows a compositional bias: basic and acidic residues. The segment at 81–98 (GSCKKCGRVGHLTFQCRN) adopts a CCHC-type zinc-finger fold. Basic and acidic residues predominate over residues 124 to 133 (IRRGVGKGEV). Residues 124–332 (IRRGVGKGEV…RKRHHRKERE (209 aa)) form a disordered region. Residues 134–153 (EEVSSEEEEESESSDSDVDS) are compositionally biased toward acidic residues. The span at 154–163 (EMERIIAERF) shows a compositional bias: basic and acidic residues. 2 stretches are compositionally biased toward basic residues: residues 198–214 (RKRR…HKRR) and 227–236 (SKRRKERRGR). Positions 241–250 (DDSDESEDED) are enriched in acidic residues. Basic residues-rich tracts occupy residues 254–269 (VKRK…RSRR) and 314–332 (SSKR…KERE).

Interacts with CAX1. Expressed in leaves, stems and roots, and at lower levels in flowers.

It localises to the nucleus. In terms of biological role, may regulate CAX1 cation transporter. The sequence is that of CAX-interacting protein 4 (CXIP4) from Arabidopsis thaliana (Mouse-ear cress).